The chain runs to 578 residues: Asparagine synthetase [glutamine-hydrolyzing] 3 (578 aa).

The active-site For GATase activity is the C2. One can recognise a Glutamine amidotransferase type-2 domain in the interval 2 to 185 (CGILAVLGCV…PGHIYSSKQG (184 aa)). L-glutamine-binding positions include 50 to 54 (RLAIV), 75 to 77 (NGE), and D98. Positions 210 to 450 (VRNTFEKAVI…LPKHILYRQK (241 aa)) constitute an Asparagine synthetase domain. ATP is bound by residues L231, I267, and 341-342 (SG). Over residues 555–572 (GEDKTEDSRPEKLQKLAE) the composition is skewed to basic and acidic residues. The disordered stretch occupies residues 555-578 (GEDKTEDSRPEKLQKLAEKTPAIV).

It carries out the reaction L-aspartate + L-glutamine + ATP + H2O = L-asparagine + L-glutamate + AMP + diphosphate + H(+). It functions in the pathway amino-acid biosynthesis; L-asparagine biosynthesis. Essential for nitrogen assimilation, distribution and remobilization within the plant via the phloem. The chain is Asparagine synthetase [glutamine-hydrolyzing] 3 (ASN3) from Arabidopsis thaliana (Mouse-ear cress).